Reading from the N-terminus, the 92-residue chain is Putative regulatory protein CKL_1364 (92 aa).

It belongs to the RemA family.

The sequence is that of Putative regulatory protein CKL_1364 from Clostridium kluyveri (strain ATCC 8527 / DSM 555 / NBRC 12016 / NCIMB 10680 / K1).